The chain runs to 439 residues: Rho GTPase-activating protein 1 (439 aa).

At M1 the chain carries N-acetylmethionine. The segment covering I28–K48 has biased composition (basic and acidic residues). The segment at I28–P52 is disordered. Phosphoserine occurs at positions 44, 47, 50, and 51. The CRAL-TRIO domain occupies P63–K218. At Y65 the chain carries Phosphotyrosine. The residue at position 80 (K80) is an N6-acetyllysine. The SH3-binding signature appears at P228–P238. The Rho-GAP domain occupies V244 to F431.

Found in a complex with XPO7, EIF4A1, ARHGAP1, VPS26A, VPS29, VPS35 and SFN. Interacts with BNIPL. In terms of tissue distribution, ubiquitous.

The protein resides in the cytoplasm. In terms of biological role, GTPase activator for the Rho, Rac and Cdc42 proteins, converting them to the putatively inactive GDP-bound state. Cdc42 seems to be the preferred substrate. The chain is Rho GTPase-activating protein 1 (ARHGAP1) from Homo sapiens (Human).